The primary structure comprises 661 residues: DNA cross-link repair protein PSO2/SNM1 (661 aa).

The segment at 1–44 is disordered; sequence MSRKSIVQIRRSEVKRKRSSTASSTSEGKTLHKNTHTSSKRQRT. The span at 31 to 43 shows a compositional bias: basic residues; sequence LHKNTHTSSKRQR. Residues 144-174 form a UBZ4-type zinc finger; it reads VIQCPICLENLSHLELYERETHCDTCIGSDP. Residues C147, C150, H165, and C169 each contribute to the Zn(2+) site.

The protein belongs to the DNA repair metallo-beta-lactamase (DRMBL) family.

It localises to the nucleus. Required for DNA interstrand cross-link repair. This requires cleavage of cross-linked DNA to generate DNA double strand breaks (DSBs). This protein has 5' exonuclease activity on single-stranded and double-stranded DNA, which appears to be necessary for the processing of DNA double strand breaks prior to ligation. In Saccharomyces cerevisiae (strain ATCC 204508 / S288c) (Baker's yeast), this protein is DNA cross-link repair protein PSO2/SNM1 (PSO2).